We begin with the raw amino-acid sequence, 367 residues long: Pectate lyase 1 (367 aa).

An N-terminal signal peptide occupies residues 1–21 (MASPCLVAVLVFLCAIVSCYS). Intrachain disulfides connect cysteine 28-cysteine 45 and cysteine 128-cysteine 147. N-linked (GlcNAc...) asparagine glycosylation occurs at asparagine 148. Aspartate 170 is a Ca(2+) binding site. An N-linked (GlcNAc...) asparagine glycan is attached at asparagine 178. Ca(2+) contacts are provided by aspartate 194 and aspartate 198. The active site involves arginine 250. A glycan (N-linked (GlcNAc...) asparagine) is linked at asparagine 293. Cysteine 306 and cysteine 312 form a disulfide bridge.

It belongs to the polysaccharide lyase 1 family. Amb a subfamily. The cofactor is Ca(2+).

The enzyme catalyses Eliminative cleavage of (1-&gt;4)-alpha-D-galacturonan to give oligosaccharides with 4-deoxy-alpha-D-galact-4-enuronosyl groups at their non-reducing ends.. Its pathway is glycan metabolism; pectin degradation; 2-dehydro-3-deoxy-D-gluconate from pectin: step 2/5. Its function is as follows. Has pectate lyase activity. In Hesperocyparis arizonica (Arizona cypress), this protein is Pectate lyase 1.